The primary structure comprises 231 residues: Phosphoglycolate phosphatase (231 aa).

Residue D9 is the Nucleophile of the active site. Mg(2+) contacts are provided by D9 and D11. Position 154 (K154) interacts with substrate. 2 residues coordinate Mg(2+): D177 and D181.

It belongs to the archaeal SPP-like hydrolase family. It depends on Mg(2+) as a cofactor.

The enzyme catalyses 2-phosphoglycolate + H2O = glycolate + phosphate. In terms of biological role, catalyzes the dephosphorylation of 2-phosphoglycolate. The sequence is that of Phosphoglycolate phosphatase from Nitrosopumilus maritimus (strain SCM1).